A 110-amino-acid polypeptide reads, in one-letter code: Single-stranded DNA-binding protein 1 (110 aa).

Positions 1–104 constitute an SSB domain; the sequence is MNKILLIGRM…VVGEEVQFLE (104 aa).

Homotetramer.

The polypeptide is Single-stranded DNA-binding protein 1 (ssb1) (Clostridium acetobutylicum (strain ATCC 824 / DSM 792 / JCM 1419 / IAM 19013 / LMG 5710 / NBRC 13948 / NRRL B-527 / VKM B-1787 / 2291 / W)).